The following is a 263-amino-acid chain: Probable elongation factor 1-beta/1-delta 2 (263 aa).

N-acetylserine is present on S2. The segment at 112–153 (QGQTSSVAAPAAAPAAAKEEAAGDDDFDLFGSEDEEEDEEKK) is disordered. Acidic residues predominate over residues 133-150 (AGDDDFDLFGSEDEEEDE).

It belongs to the EF-1-beta/EF-1-delta family. As to quaternary structure, EF-1 is composed of 4 subunits: alpha, beta, delta, and gamma.

Functionally, EF-1-beta and EF-1-delta stimulate the exchange of GDP bound to EF-1-alpha to GTP. The sequence is that of Probable elongation factor 1-beta/1-delta 2 from Caenorhabditis elegans.